A 516-amino-acid chain; its full sequence is Cytochrome P450 1A2 (516 aa).

S69 carries O-linked (GlcNAc) serine glycosylation. Residue F226 coordinates substrate. C458 contacts heme.

It belongs to the cytochrome P450 family. In terms of assembly, interacts with PGRMC1; the interaction requires PGRMC1 homodimerization. The cofactor is heme.

It is found in the endoplasmic reticulum membrane. The protein localises to the microsome membrane. It catalyses the reaction an organic molecule + reduced [NADPH--hemoprotein reductase] + O2 = an alcohol + oxidized [NADPH--hemoprotein reductase] + H2O + H(+). The enzyme catalyses 17beta-estradiol + reduced [NADPH--hemoprotein reductase] + O2 = 2-hydroxy-17beta-estradiol + oxidized [NADPH--hemoprotein reductase] + H2O + H(+). It carries out the reaction 17beta-estradiol + reduced [NADPH--hemoprotein reductase] + O2 = 4-hydroxy-17beta-estradiol + oxidized [NADPH--hemoprotein reductase] + H2O + H(+). The catalysed reaction is estrone + reduced [NADPH--hemoprotein reductase] + O2 = 2-hydroxyestrone + oxidized [NADPH--hemoprotein reductase] + H2O + H(+). It catalyses the reaction estrone + reduced [NADPH--hemoprotein reductase] + O2 = 4-hydroxyestrone + oxidized [NADPH--hemoprotein reductase] + H2O + H(+). The enzyme catalyses cholesterol + reduced [NADPH--hemoprotein reductase] + O2 = 25-hydroxycholesterol + oxidized [NADPH--hemoprotein reductase] + H2O + H(+). It carries out the reaction all-trans-retinol + reduced [NADPH--hemoprotein reductase] + O2 = all-trans-retinal + oxidized [NADPH--hemoprotein reductase] + 2 H2O + H(+). The catalysed reaction is all-trans-retinal + reduced [NADPH--hemoprotein reductase] + O2 = all-trans-retinoate + oxidized [NADPH--hemoprotein reductase] + H2O + 2 H(+). It catalyses the reaction (5Z,8Z,11Z,14Z)-eicosatetraenoate + reduced [NADPH--hemoprotein reductase] + O2 = (14R,15S)-epoxy-(5Z,8Z,11Z)-eicosatrienoate + oxidized [NADPH--hemoprotein reductase] + H2O + H(+). The enzyme catalyses (5Z,8Z,11Z,14Z)-eicosatetraenoate + reduced [NADPH--hemoprotein reductase] + O2 = (14S,15R)-epoxy-(5Z,8Z,11Z)-eicosatrienoate + oxidized [NADPH--hemoprotein reductase] + H2O + H(+). It carries out the reaction (5Z,8Z,11Z,14Z,17Z)-eicosapentaenoate + reduced [NADPH--hemoprotein reductase] + O2 = (17R,18S)-epoxy-(5Z,8Z,11Z,14Z)-eicosatetraenoate + oxidized [NADPH--hemoprotein reductase] + H2O + H(+). The catalysed reaction is (4Z,7Z,10Z,13Z,16Z,19Z)-docosahexaenoate + reduced [NADPH--hemoprotein reductase] + O2 = (19R,20S)-epoxy-(4Z,7Z,10Z,13Z,16Z)-docosapentaenoate + oxidized [NADPH--hemoprotein reductase] + H2O + H(+). It catalyses the reaction (5S)-hydroperoxy-(6E,8Z,11Z,14Z)-eicosatetraenoate = 5-oxo-(6E,8Z,11Z,14Z)-eicosatetraenoate + H2O. The enzyme catalyses (12S)-hydroperoxy-(5Z,8Z,10E,14Z)-eicosatetraenoate = 12-oxo-(5Z,8Z,10E,14Z)-eicosatetraenoate + H2O. It carries out the reaction (15S)-hydroperoxy-(5Z,8Z,11Z,13E)-eicosatetraenoate = 15-oxo-(5Z,8Z,11Z,13E)-eicosatetraenoate + H2O. The catalysed reaction is (13S)-hydroperoxy-(9Z,11E)-octadecadienoate = 13-oxo-(9Z,11E)-octadecadienoate + H2O. It catalyses the reaction (5Z,8Z,11Z,14Z)-eicosatetraenoate + reduced [NADPH--hemoprotein reductase] + O2 = 13-hydroxy-(5Z,8Z,11Z,14Z)-eicosatetraenoate + oxidized [NADPH--hemoprotein reductase] + H2O + H(+). The enzyme catalyses (5Z,8Z,11Z,14Z)-eicosatetraenoate + reduced [NADPH--hemoprotein reductase] + O2 = 19-hydroxy-(5Z,8Z,11Z,14Z)-eicosatetraenoate + oxidized [NADPH--hemoprotein reductase] + H2O + H(+). It carries out the reaction (9Z,12Z)-octadecadienoate + reduced [NADPH--hemoprotein reductase] + O2 = 11-hydroxy-(9Z,12Z)-octadecadienoate + oxidized [NADPH--hemoprotein reductase] + H2O + H(+). It participates in cofactor metabolism; retinol metabolism. The protein operates within steroid metabolism; cholesterol metabolism. It functions in the pathway lipid metabolism; arachidonate metabolism. A cytochrome P450 monooxygenase involved in the metabolism of various endogenous substrates, including fatty acids, steroid hormones and vitamins. Mechanistically, uses molecular oxygen inserting one oxygen atom into a substrate, and reducing the second into a water molecule, with two electrons provided by NADPH via cytochrome P450 reductase (NADPH--hemoprotein reductase). Catalyzes the hydroxylation of carbon-hydrogen bonds. Exhibits high catalytic activity for the formation of hydroxyestrogens from estrone (E1) and 17beta-estradiol (E2), namely 2-hydroxy E1 and E2. Metabolizes cholesterol toward 25-hydroxycholesterol, a physiological regulator of cellular cholesterol homeostasis. May act as a major enzyme for all-trans retinoic acid biosynthesis in the liver. Catalyzes two successive oxidative transformation of all-trans retinol to all-trans retinal and then to the active form all-trans retinoic acid. Primarily catalyzes stereoselective epoxidation of the last double bond of polyunsaturated fatty acids (PUFA), displaying a strong preference for the (R,S) stereoisomer. Catalyzes bisallylic hydroxylation and omega-1 hydroxylation of PUFA. May also participate in eicosanoids metabolism by converting hydroperoxide species into oxo metabolites (lipoxygenase-like reaction, NADPH-independent). Plays a role in the oxidative metabolism of xenobiotics. Catalyzes the N-hydroxylation of heterocyclic amines and the O-deethylation of phenacetin. Metabolizes caffeine via N3-demethylation. The sequence is that of Cytochrome P450 1A2 (CYP1A2) from Macaca fuscata fuscata (Japanese macaque).